The following is a 92-amino-acid chain: Kinetoplastid membrane protein 11C (92 aa).

This sequence belongs to the KMP-11 family. As to quaternary structure, monomer.

Its subcellular location is the cytoplasm. The protein localises to the cytoskeleton. The protein resides in the cell projection. It is found in the cilium. It localises to the flagellum. Functionally, may be involved in the regulation of the cytoskeleton through interaction with the subpellicular microtubules. May be involved in parasite mobility and attachment to the surface of the host cell. Behaves as a strong immunogen during infection. This Leishmania infantum protein is Kinetoplastid membrane protein 11C (KMP-11C).